A 605-amino-acid chain; its full sequence is Elongation factor 4 (605 aa).

Residues 10-192 (KNIRNFAIVA…AIVMRLPPPH (183 aa)) enclose the tr-type G domain. GTP-binding positions include 22–27 (DHGKST) and 139–142 (NKVD).

This sequence belongs to the TRAFAC class translation factor GTPase superfamily. Classic translation factor GTPase family. LepA subfamily.

It is found in the cell inner membrane. The catalysed reaction is GTP + H2O = GDP + phosphate + H(+). Required for accurate and efficient protein synthesis under certain stress conditions. May act as a fidelity factor of the translation reaction, by catalyzing a one-codon backward translocation of tRNAs on improperly translocated ribosomes. Back-translocation proceeds from a post-translocation (POST) complex to a pre-translocation (PRE) complex, thus giving elongation factor G a second chance to translocate the tRNAs correctly. Binds to ribosomes in a GTP-dependent manner. This chain is Elongation factor 4, found in Chelativorans sp. (strain BNC1).